We begin with the raw amino-acid sequence, 241 residues long: Phosphoglycolate phosphatase (241 aa).

Aspartate 8 serves as the catalytic Nucleophile. The Mg(2+) site is built by aspartate 8, aspartate 10, and aspartate 174.

Belongs to the HAD-like hydrolase superfamily. CbbY/CbbZ/Gph/YieH family. Requires Mg(2+) as cofactor.

The enzyme catalyses 2-phosphoglycolate + H2O = glycolate + phosphate. It participates in organic acid metabolism; glycolate biosynthesis; glycolate from 2-phosphoglycolate: step 1/1. In terms of biological role, specifically catalyzes the dephosphorylation of 2-phosphoglycolate. Is involved in the dissimilation of the intracellular 2-phosphoglycolate formed during the DNA repair of 3'-phosphoglycolate ends, a major class of DNA lesions induced by oxidative stress. The sequence is that of Phosphoglycolate phosphatase from Rhodospirillum rubrum (strain ATCC 11170 / ATH 1.1.1 / DSM 467 / LMG 4362 / NCIMB 8255 / S1).